Here is a 697-residue protein sequence, read N- to C-terminus: MQTQEILRILRLPELGDLGQFFRSLSATTLVSMGALAAILAYWFTHRPKALQPPCNLLMQSEEVEDSGGARRSVIGSGPQLLTHYYDDARTMYQVFRRGLSISGNGPCLGFRKPKQPYQWLSYQEVADRAEFLGSGLLQHNCKACTDQFIGVFAQNRPEWIIVELACYTYSMVVVPLYDTLGPGAIRYIINTADISTVIVDKPQKAVLLLEHVERKETPGLKLIILMDPFEEALKERGQKCGVVIKSMQAVEDCGQENHQAPVPPQPDDLSIVCFTSGTTGNPKGAMLTHGNVVADFSGFLKVTEKVIFPRQDDVLISFLPLAHMFERVIQSVVYCHGGRVGFFQGDIRLLSDDMKALCPTIFPVVPRLLNRMYDKIFSQANTPLKRWLLEFAAKRKQAEVRSGIIRNDSIWDELFFNKIQASLGGCVRMIVTGAAPASPTVLGFLRAALGCQVYEGYGQTECTAGCTFTTPGDWTSGHVGAPLPCNHIKLVDVEELNYWACKGEGEICVRGPNVFKGYLKDPDRTKEALDSDGWLHTGDIGKWLPAGTLKIIDRKKHIFKLAQGEYVAPEKIENIYIRSQPVAQIYVHGDSLKAFLVGIVVPDPEVMPSWAQKRGIEGTYADLCTNKDLKKAILEDMVRLGKESGLHSFEQVKAIHIHSDMFSVQNGLLTPTLKAKRPELREYFKKQIEELYSISM.

The chain crosses the membrane as a helical; Signal-anchor for type III membrane protein span at residues 25 to 45; that stretch reads LSATTLVSMGALAAILAYWFT. The Cytoplasmic portion of the chain corresponds to 46–697; the sequence is HRPKALQPPC…QIEELYSISM (652 aa).

Belongs to the ATP-dependent AMP-binding enzyme family. Requires Mg(2+) as cofactor. In terms of tissue distribution, expressed predominantly in erythrocyte precursors, in particular in reticulocytes, fetal blood cells derived from fetal liver, hemopoietic stem cells from cord blood, bone marrow and brain.

The protein localises to the mitochondrion outer membrane. The protein resides in the peroxisome membrane. Its subcellular location is the microsome membrane. It localises to the endoplasmic reticulum membrane. It carries out the reaction a long-chain fatty acid + ATP + CoA = a long-chain fatty acyl-CoA + AMP + diphosphate. The catalysed reaction is (5Z,8Z,11Z,14Z)-eicosatetraenoate + ATP + CoA = (5Z,8Z,11Z,14Z)-eicosatetraenoyl-CoA + AMP + diphosphate. The enzyme catalyses hexadecanoate + ATP + CoA = hexadecanoyl-CoA + AMP + diphosphate. It catalyses the reaction (E)-hexadec-2-enoate + ATP + CoA = (2E)-hexadecenoyl-CoA + AMP + diphosphate. It carries out the reaction 15-hydroxy-(5Z,8Z,11Z,13E)-eicosatetraenoate + ATP + CoA = 15-hydroxy-(5Z,8Z,11Z,13E)-eicosatetraenoyl-CoA + AMP + diphosphate. The catalysed reaction is 12-hydroxy-(5Z,8Z,10E,14Z)-eicosatetraenoate + ATP + CoA = 12-hydroxy-(5Z,8Z,10E,14Z)-eicosatetraenoyl-CoA + AMP + diphosphate. The enzyme catalyses 5-hydroxy-(6E,8Z,11Z,14Z)-eicosatetraenoate + ATP + CoA = 5-hydroxy-(6E,8Z,11Z,14Z)-eicosatetraenoyl-CoA + AMP + diphosphate. Functionally, catalyzes the conversion of long-chain fatty acids to their active form acyl-CoA for both synthesis of cellular lipids, and degradation via beta-oxidation. Plays an important role in fatty acid metabolism in brain and the acyl-CoAs produced may be utilized exclusively for the synthesis of the brain lipid. The polypeptide is Long-chain-fatty-acid--CoA ligase 6 (Homo sapiens (Human)).